The following is a 491-amino-acid chain: Glycogen synthase (491 aa).

Lys15 is a binding site for ADP-alpha-D-glucose.

This sequence belongs to the glycosyltransferase 1 family. Bacterial/plant glycogen synthase subfamily.

The catalysed reaction is [(1-&gt;4)-alpha-D-glucosyl](n) + ADP-alpha-D-glucose = [(1-&gt;4)-alpha-D-glucosyl](n+1) + ADP + H(+). It functions in the pathway glycan biosynthesis; glycogen biosynthesis. Functionally, synthesizes alpha-1,4-glucan chains using ADP-glucose. The polypeptide is Glycogen synthase (Hydrogenovibrio crunogenus (strain DSM 25203 / XCL-2) (Thiomicrospira crunogena)).